Consider the following 693-residue polypeptide: Ion-translocating oxidoreductase complex subunit C (693 aa).

4Fe-4S ferredoxin-type domains lie at 368–397 (MEPVAEEQSCIRCSKCADACPAGLLPQQLY) and 407–436 (KARDHHLFDCIECGACAYVCPSNIPLVQYY). The [4Fe-4S] cluster site is built by cysteine 377, cysteine 380, cysteine 383, cysteine 387, cysteine 416, cysteine 419, cysteine 422, and cysteine 426. Over residues 539–548 (REERVREKQS) the composition is skewed to basic and acidic residues. The interval 539–564 (REERVREKQSQQETPATEVTPEELDP) is disordered.

This sequence belongs to the 4Fe4S bacterial-type ferredoxin family. RnfC subfamily. The complex is composed of six subunits: RnfA, RnfB, RnfC, RnfD, RnfE and RnfG. The cofactor is [4Fe-4S] cluster.

The protein resides in the cell inner membrane. Functionally, part of a membrane-bound complex that couples electron transfer with translocation of ions across the membrane. This chain is Ion-translocating oxidoreductase complex subunit C, found in Pectobacterium atrosepticum (strain SCRI 1043 / ATCC BAA-672) (Erwinia carotovora subsp. atroseptica).